The sequence spans 355 residues: Tyrosine recombinase XerC (355 aa).

The region spanning 4–89 (TQFDGDIDSF…AVRGFFAWAY (86 aa)) is the Core-binding (CB) domain. The interval 137–181 (KDDGGAAAAPGSGKAAGKTADKSADTVNRSEAPARADKRDNARVT) is disordered. Residues 141 to 154 (GAAAAPGSGKAAGK) are compositionally biased toward low complexity. One can recognise a Tyr recombinase domain in the interval 158–349 (KSADTVNRSE…SIEQLKNRYG (192 aa)). Residues 168–178 (APARADKRDNA) are compositionally biased toward basic and acidic residues. Catalysis depends on residues R200, K224, H301, R304, and H327. The O-(3'-phospho-DNA)-tyrosine intermediate role is filled by Y336.

Belongs to the 'phage' integrase family. XerC subfamily. Forms a cyclic heterotetrameric complex composed of two molecules of XerC and two molecules of XerD.

Its subcellular location is the cytoplasm. Site-specific tyrosine recombinase, which acts by catalyzing the cutting and rejoining of the recombining DNA molecules. The XerC-XerD complex is essential to convert dimers of the bacterial chromosome into monomers to permit their segregation at cell division. It also contributes to the segregational stability of plasmids. This Bifidobacterium longum (strain DJO10A) protein is Tyrosine recombinase XerC.